The primary structure comprises 430 residues: F-box/kelch-repeat protein At4g33290 (430 aa).

In terms of domain architecture, F-box spans 1–44; that stretch reads MITDLPKDLIEEILSRVSMTSMRVVRLTCKSWNTLSNSESFKKM. Kelch repeat units lie at residues 161–207, 312–363, and 383–430; these read LLRF…CVQG, VPFI…IIEE, and LVRI…RPTR.

The sequence is that of F-box/kelch-repeat protein At4g33290 from Arabidopsis thaliana (Mouse-ear cress).